Reading from the N-terminus, the 29-residue chain is Cytochrome b6-f complex subunit 8 (29 aa).

A helical transmembrane segment spans residues 3–23 (IVSLAWAGLMVVFTFSLSLVV).

This sequence belongs to the PetN family. As to quaternary structure, the 4 large subunits of the cytochrome b6-f complex are cytochrome b6, subunit IV (17 kDa polypeptide, PetD), cytochrome f and the Rieske protein, while the 4 small subunits are PetG, PetL, PetM and PetN. The complex functions as a dimer.

It localises to the plastid. The protein resides in the chloroplast thylakoid membrane. Component of the cytochrome b6-f complex, which mediates electron transfer between photosystem II (PSII) and photosystem I (PSI), cyclic electron flow around PSI, and state transitions. The sequence is that of Cytochrome b6-f complex subunit 8 from Arabis hirsuta (Hairy rock-cress).